The following is an 856-amino-acid chain: Valine--tRNA ligase (856 aa).

The 'HIGH' region signature appears at 47–57 (PTASGVLHIGH). A 'KMSKS' region motif is present at residues 578-582 (KMSKS). K581 provides a ligand contact to ATP.

It belongs to the class-I aminoacyl-tRNA synthetase family. ValS type 2 subfamily. Monomer.

It localises to the cytoplasm. The catalysed reaction is tRNA(Val) + L-valine + ATP = L-valyl-tRNA(Val) + AMP + diphosphate. In terms of biological role, catalyzes the attachment of valine to tRNA(Val). As ValRS can inadvertently accommodate and process structurally similar amino acids such as threonine, to avoid such errors, it has a 'posttransfer' editing activity that hydrolyzes mischarged Thr-tRNA(Val) in a tRNA-dependent manner. The sequence is that of Valine--tRNA ligase from Tropheryma whipplei (strain Twist) (Whipple's bacillus).